The primary structure comprises 58 residues: Small ribosomal subunit protein bS21 (58 aa).

The interval 36–58 (EHYEKPSVKRKKKSEAARKRKFK) is disordered. Basic residues predominate over residues 43 to 58 (VKRKKKSEAARKRKFK).

Belongs to the bacterial ribosomal protein bS21 family.

The sequence is that of Small ribosomal subunit protein bS21 from Clostridium kluyveri (strain NBRC 12016).